Reading from the N-terminus, the 1032-residue chain is Calmodulin-binding transcription activator 3 (1032 aa).

Residues 15–141 (VGQILSEARH…YLEVKGSRVS (127 aa)) constitute a DNA-binding region (CG-1). Positions 146–197 (RMQRTEDAARSPQETGDALTSEHDGYASCSFNQNDHSNHSQTTDSASVNGFH) are disordered. The segment covering 174–195 (CSFNQNDHSNHSQTTDSASVNG) has biased composition (polar residues). At S272 the chain carries Phosphoserine. ANK repeat units lie at residues 661-690 (GGQG…SVDF), 694-723 (NGWT…APGT), and 733-762 (SGST…RAHV). IQ domains follow at residues 852 to 881 (VQAA…RIIK) and 875 to 904 (TRQR…SVGV). The interval 900 to 922 (WSVGVLEKVILRWRRKGAGLRGF) is calmodulin-binding. A coiled-coil region spans residues 945 to 987 (KQGRKQTEDRLQKALARVKSMVQYPEARDQYRRLLNVVNDIQE). At S964 the chain carries Phosphoserine.

The protein belongs to the CAMTA family. In terms of assembly, interacts with SR1IP1. Interacts with DSC1. In terms of processing, ubiquinated during pathogen infection. Ubiquitination leads to its subsequent proteasome-dependent degradation, thus allowing the establishment of plant defense response. Expressed in roots, stems, leaves, carpels, and siliques, but not in stigmas or other parts of the flower.

It localises to the nucleus. Functionally, transcription activator that binds to the DNA consensus sequence 5'-[ACG]CGCG[GTC]-3'. Binds calmodulin in a calcium-dependent manner in vitro. Regulates transcriptional activity in response to calcium signals. Involved in freezing tolerance in association with CAMTA1 and CAMTA2. Required for the cold-induced expression of DREB1B/CBF1, DREB1C/CBF2, ZAT12 and GOLS3. Involved in response to cold. Contributes together with CAMTA5 to the positive regulation of the cold-induced expression of DREB1A/CBF3, DREB1B/CBF1 and DREB1C/CBF2. Involved together with CAMTA2 and CAMTA4 in the positive regulation of a general stress response (GSR). Involved in the regulation of GSR amplitude downstream of MEKK1. Involved in the regulation of a set of genes involved in defense responses against pathogens. Involved in the regulation of both basal resistance and systemic acquired resistance (SAR). Acts as negative regulator of plant immunity. Binds to the promoter of the defense-related gene EDS1 and represses its expression. Binds to the promoter of the defense-related gene NDR1 and represses its expression. Involved in defense against insects. Required for tolerance to the generalist herbivore Trichoplusia ni, and contributes to the positive regulation of genes associated with glucosinolate metabolism. Required for tolerance to Bradysia impatiens larvae. Mediates herbivore-induced wound response. Required for wound-induced jasmonate accumulation. Involved in the regulation of ethylene-induced senescence by binding to the promoter of the senescence-inducer gene EIN3 and repressing its expression. The sequence is that of Calmodulin-binding transcription activator 3 from Arabidopsis thaliana (Mouse-ear cress).